A 503-amino-acid polypeptide reads, in one-letter code: NAD-dependent protein deacetylase HST1 (503 aa).

The Deacetylase sirtuin-type domain maps to 183–468 (RLPNFNTIDH…SLVAKKCHWD (286 aa)). NAD(+) is bound by residues 208–227 (GAGV…EGFY) and 290–293 (QNID). The Proton acceptor role is filled by His310. Zn(2+) contacts are provided by Cys318, Cys321, Cys342, and Cys345. NAD(+)-binding positions include 412 to 414 (GTS), 437 to 439 (NRD), and Cys454.

The protein belongs to the sirtuin family. Class I subfamily. In terms of assembly, identified in the Set3C complex with HOS2, SIF2, SNT1, CPR1, HOS4/YIL112W and SET3. Its presence is however not essential for meiotic repression by the Set3C complex. Interacts with SUM1 and RFM1. The interaction with SUM1 is mediated by RFM1. Zn(2+) is required as a cofactor.

It is found in the nucleus. It carries out the reaction N(6)-acetyl-L-lysyl-[protein] + NAD(+) + H2O = 2''-O-acetyl-ADP-D-ribose + nicotinamide + L-lysyl-[protein]. NAD-dependent histone deacetylase involved in telomeric silencing. Histone deacetylase proteins act via the formation of large multiprotein complexes that are responsible for the deacetylation of lysine residues on the N-terminal part of the core histones (H2A, H2B, H3 and H4). Histone deacetylation gives a tag for epigenetic repression and plays an important role in transcriptional regulation, cell cycle progression and developmental events. Restores silencing at HMR in SIR2 mutants when overexpressed. Required to repress middle sporulation genes during vegetative growth. Acts as a sensor of NAD(+) levels and regulator of NAD(+) biosynthesis. Regulates the gene expression of de novo NAD(+) biosynthesis genes. The sequence is that of NAD-dependent protein deacetylase HST1 (HST1) from Saccharomyces cerevisiae (strain ATCC 204508 / S288c) (Baker's yeast).